The primary structure comprises 395 residues: Pyridinium-3,5-bisthiocarboxylic acid mononucleotide nickel insertion protein (395 aa).

The protein belongs to the LarC family.

It carries out the reaction Ni(II)-pyridinium-3,5-bisthiocarboxylate mononucleotide = pyridinium-3,5-bisthiocarboxylate mononucleotide + Ni(2+). In terms of biological role, involved in the biosynthesis of a nickel-pincer cofactor ((SCS)Ni(II) pincer complex). Binds Ni(2+), and functions in nickel delivery to pyridinium-3,5-bisthiocarboxylic acid mononucleotide (P2TMN), to form the mature cofactor. Is thus probably required for the activation of nickel-pincer cofactor-dependent enzymes. This chain is Pyridinium-3,5-bisthiocarboxylic acid mononucleotide nickel insertion protein, found in Staphylococcus epidermidis (strain ATCC 12228 / FDA PCI 1200).